A 1147-amino-acid chain; its full sequence is ATP-dependent helicase/deoxyribonuclease subunit B (1147 aa).

G8–S15 is a binding site for ATP. Residues C786, C1106, C1109, and C1115 each coordinate [4Fe-4S] cluster.

It belongs to the helicase family. AddB/RexB type 1 subfamily. Heterodimer of AddA and AddB. The cofactor is Mg(2+). It depends on [4Fe-4S] cluster as a cofactor.

In terms of biological role, the heterodimer acts as both an ATP-dependent DNA helicase and an ATP-dependent, dual-direction single-stranded exonuclease. Recognizes the chi site generating a DNA molecule suitable for the initiation of homologous recombination. The AddB subunit has 5' -&gt; 3' nuclease activity but not helicase activity. This is ATP-dependent helicase/deoxyribonuclease subunit B from Clostridium botulinum (strain Loch Maree / Type A3).